Reading from the N-terminus, the 79-residue chain is Virulence protein MsgA (79 aa).

This sequence belongs to the DinI family.

Its function is as follows. Affects survival in macrophages. This Salmonella typhi protein is Virulence protein MsgA (msgA).